We begin with the raw amino-acid sequence, 506 residues long: GTPase Der (506 aa).

2 EngA-type G domains span residues 3 to 166 (PVVA…GEQL) and 218 to 391 (IKIA…ACAT). GTP contacts are provided by residues 9–16 (GRPNVGKS), 56–60 (DTGGI), 118–121 (NKTD), 224–231 (GRPNVGKS), 271–275 (DTAGV), and 336–339 (NKWD). The 85-residue stretch at 392-476 (QKTSTSMLTR…PIRIQFQEGN (85 aa)) folds into the KH-like domain.

The protein belongs to the TRAFAC class TrmE-Era-EngA-EngB-Septin-like GTPase superfamily. EngA (Der) GTPase family. Associates with the 50S ribosomal subunit.

Its function is as follows. GTPase that plays an essential role in the late steps of ribosome biogenesis. This chain is GTPase Der, found in Actinobacillus pleuropneumoniae serotype 5b (strain L20).